A 119-amino-acid chain; its full sequence is Large ribosomal subunit protein bL20 (119 aa).

It belongs to the bacterial ribosomal protein bL20 family.

Functionally, binds directly to 23S ribosomal RNA and is necessary for the in vitro assembly process of the 50S ribosomal subunit. It is not involved in the protein synthesizing functions of that subunit. The sequence is that of Large ribosomal subunit protein bL20 from Deinococcus geothermalis (strain DSM 11300 / CIP 105573 / AG-3a).